A 270-amino-acid polypeptide reads, in one-letter code: Phosphatidylglycerol--prolipoprotein diacylglyceryl transferase (270 aa).

A run of 7 helical transmembrane segments spans residues 14–34, 60–80, 103–123, 133–153, 181–201, 209–229, and 235–255; these read VAFT…ILAL, YFFW…IAIY, FVGI…LATI, LWQL…FGRI, PSQL…LFFY, GELI…CEFF, and GIGF…LMFF. Residue Arg152 participates in a 1,2-diacyl-sn-glycero-3-phospho-(1'-sn-glycerol) binding.

The protein belongs to the Lgt family.

Its subcellular location is the cell inner membrane. It carries out the reaction L-cysteinyl-[prolipoprotein] + a 1,2-diacyl-sn-glycero-3-phospho-(1'-sn-glycerol) = an S-1,2-diacyl-sn-glyceryl-L-cysteinyl-[prolipoprotein] + sn-glycerol 1-phosphate + H(+). The protein operates within protein modification; lipoprotein biosynthesis (diacylglyceryl transfer). Functionally, catalyzes the transfer of the diacylglyceryl group from phosphatidylglycerol to the sulfhydryl group of the N-terminal cysteine of a prolipoprotein, the first step in the formation of mature lipoproteins. This is Phosphatidylglycerol--prolipoprotein diacylglyceryl transferase from Campylobacter curvus (strain 525.92).